The sequence spans 274 residues: Large ribosomal subunit protein uL2 (274 aa).

A disordered region spans residues 221 to 274 (RGTAMNPVDHPHGGGEGKNFGKHPVTPWGVQTKGKKTRSNKRTDKFIVRRRSKK).

It belongs to the universal ribosomal protein uL2 family. Part of the 50S ribosomal subunit. Forms a bridge to the 30S subunit in the 70S ribosome.

In terms of biological role, one of the primary rRNA binding proteins. Required for association of the 30S and 50S subunits to form the 70S ribosome, for tRNA binding and peptide bond formation. It has been suggested to have peptidyltransferase activity; this is somewhat controversial. Makes several contacts with the 16S rRNA in the 70S ribosome. In Serratia proteamaculans (strain 568), this protein is Large ribosomal subunit protein uL2.